Reading from the N-terminus, the 220-residue chain is Pyridoxine/pyridoxamine 5'-phosphate oxidase (220 aa).

Residues 49–54 (RMVLLK), 68–69 (YT), lysine 75, and glutamine 97 each bind FMN. Substrate is bound at residue lysine 54. The substrate site is built by tyrosine 115, arginine 119, and serine 123. Residues 132–133 (QS) and tryptophan 176 each bind FMN. Residue 182 to 184 (RLH) coordinates substrate. Arginine 186 contacts FMN.

It belongs to the pyridoxamine 5'-phosphate oxidase family. Homodimer. FMN serves as cofactor.

It catalyses the reaction pyridoxamine 5'-phosphate + O2 + H2O = pyridoxal 5'-phosphate + H2O2 + NH4(+). It carries out the reaction pyridoxine 5'-phosphate + O2 = pyridoxal 5'-phosphate + H2O2. It participates in cofactor metabolism; pyridoxal 5'-phosphate salvage; pyridoxal 5'-phosphate from pyridoxamine 5'-phosphate: step 1/1. It functions in the pathway cofactor metabolism; pyridoxal 5'-phosphate salvage; pyridoxal 5'-phosphate from pyridoxine 5'-phosphate: step 1/1. Functionally, catalyzes the oxidation of either pyridoxine 5'-phosphate (PNP) or pyridoxamine 5'-phosphate (PMP) into pyridoxal 5'-phosphate (PLP). The sequence is that of Pyridoxine/pyridoxamine 5'-phosphate oxidase from Paracoccus denitrificans (strain Pd 1222).